The chain runs to 357 residues: Protein XRP2 (357 aa).

Positions 1 to 11 (MGCFFSKRRKP) are enriched in basic residues. Residues 1 to 39 (MGCFFSKRRKPAQGGQQQGASQEPAAGEEKAPQYSWDQR) form a disordered region. A lipid anchor (N-myristoyl glycine) is attached at glycine 2. Cysteine 3 is lipidated: S-palmitoyl cysteine. The span at 12 to 25 (AQGGQQQGASQEPA) shows a compositional bias: low complexity. The 155-residue stretch at 32 to 186 (PQYSWDQRAK…TWSNIHDFTP (155 aa)) folds into the C-CAP/cofactor C-like domain. Residues 105 to 106 (GS) and 122 to 125 (QQFR) contribute to the GTP site.

The protein belongs to the TBCC family. In terms of processing, myristoylated on Gly-2; which may be required for membrane targeting. Post-translationally, palmitoylated on Cys-3; which may be required for plasma membrane targeting.

The protein localises to the cell membrane. Functionally, acts as a GTPase-activating protein (GAP) for tubulin in concert with tubulin-specific chaperone C, but does not enhance tubulin heterodimerization. Acts as a GTPase-activating protein. May act as guanine nucleotide dissociation inhibitor towards ADP-ribosylation factor-like proteins. This chain is Protein XRP2 (RP2), found in Gallus gallus (Chicken).